Consider the following 209-residue polypeptide: Ion-translocating oxidoreductase complex subunit G (209 aa).

A helical transmembrane segment spans residues 9–29; it reads GITLALFAAGATGLTAVVNSL. At threonine 175 the chain carries FMN phosphoryl threonine.

This sequence belongs to the RnfG family. As to quaternary structure, the complex is composed of six subunits: RnfA, RnfB, RnfC, RnfD, RnfE and RnfG. The cofactor is FMN.

The protein localises to the cell inner membrane. In terms of biological role, part of a membrane-bound complex that couples electron transfer with translocation of ions across the membrane. This Yersinia pestis protein is Ion-translocating oxidoreductase complex subunit G.